The primary structure comprises 430 residues: S-adenosylmethionine synthase (430 aa).

His14 is a binding site for ATP. Position 16 (Asp16) interacts with Mg(2+). Glu42 is a K(+) binding site. L-methionine is bound by residues Glu55 and Gln98. Residues 98-108 (QSPDINRGVER) are flexible loop. ATP contacts are provided by residues 164 to 166 (DAK), 254 to 255 (KF), Asp263, 269 to 270 (RK), Ala286, and Lys290. L-methionine is bound at residue Asp263. Residue Lys294 participates in L-methionine binding.

This sequence belongs to the AdoMet synthase family. As to quaternary structure, homotetramer; dimer of dimers. Requires Mg(2+) as cofactor. The cofactor is K(+).

The protein resides in the cytoplasm. The catalysed reaction is L-methionine + ATP + H2O = S-adenosyl-L-methionine + phosphate + diphosphate. The protein operates within amino-acid biosynthesis; S-adenosyl-L-methionine biosynthesis; S-adenosyl-L-methionine from L-methionine: step 1/1. In terms of biological role, catalyzes the formation of S-adenosylmethionine (AdoMet) from methionine and ATP. The overall synthetic reaction is composed of two sequential steps, AdoMet formation and the subsequent tripolyphosphate hydrolysis which occurs prior to release of AdoMet from the enzyme. The polypeptide is S-adenosylmethionine synthase (Bacteroides thetaiotaomicron (strain ATCC 29148 / DSM 2079 / JCM 5827 / CCUG 10774 / NCTC 10582 / VPI-5482 / E50)).